The primary structure comprises 160 residues: UPF0178 protein PA5247 (160 aa).

The protein belongs to the UPF0178 family.

The chain is UPF0178 protein PA5247 from Pseudomonas aeruginosa (strain ATCC 15692 / DSM 22644 / CIP 104116 / JCM 14847 / LMG 12228 / 1C / PRS 101 / PAO1).